We begin with the raw amino-acid sequence, 142 residues long: Large ribosomal subunit protein uL13 (142 aa).

It belongs to the universal ribosomal protein uL13 family. As to quaternary structure, part of the 50S ribosomal subunit.

Its function is as follows. This protein is one of the early assembly proteins of the 50S ribosomal subunit, although it is not seen to bind rRNA by itself. It is important during the early stages of 50S assembly. The sequence is that of Large ribosomal subunit protein uL13 from Yersinia pseudotuberculosis serotype O:1b (strain IP 31758).